A 411-amino-acid chain; its full sequence is Glucose-1-phosphate adenylyltransferase (411 aa).

Alpha-D-glucose 1-phosphate-binding positions include G161, 176-177 (EK), and S195.

The protein belongs to the bacterial/plant glucose-1-phosphate adenylyltransferase family. In terms of assembly, homotetramer.

It carries out the reaction alpha-D-glucose 1-phosphate + ATP + H(+) = ADP-alpha-D-glucose + diphosphate. It functions in the pathway glycan biosynthesis; glycogen biosynthesis. In terms of biological role, involved in the biosynthesis of ADP-glucose, a building block required for the elongation reactions to produce glycogen. Catalyzes the reaction between ATP and alpha-D-glucose 1-phosphate (G1P) to produce pyrophosphate and ADP-Glc. The sequence is that of Glucose-1-phosphate adenylyltransferase from Anaeromyxobacter sp. (strain Fw109-5).